Consider the following 335-residue polypeptide: Taste receptor type 2 member 119 (335 aa).

Residues 1–7 are Extracellular-facing; that stretch reads MMEGHIL. The helical transmembrane segment at 8-28 threads the bilayer; that stretch reads FFFLVVMVQFVTGVLANGLIV. Topologically, residues 29 to 43 are cytoplasmic; the sequence is VVHAIDLIMWKKMAP. A helical membrane pass occupies residues 44-64; the sequence is LDLLLFCLATSRIILQLCILF. The Extracellular segment spans residues 65–81; that stretch reads AQLCLFSLVRHTLFEDN. Asn-81 is a glycosylation site (N-linked (GlcNAc...) asparagine). A helical transmembrane segment spans residues 82 to 102; the sequence is ITFVFIINELSLWFATWLGVF. At 103–124 the chain is on the cytoplasmic side; that stretch reads YCAKIATIPHPLFLWLKMRISR. The chain crosses the membrane as a helical span at residues 125 to 145; that stretch reads LVPWLILGSVLYVIITTFIHS. Residues 146–176 lie on the Extracellular side of the membrane; that stretch reads RETSAILKPIFISLFPKNATQVGTGHATLLS. N-linked (GlcNAc...) asparagine glycosylation is present at Asn-163. The helical transmembrane segment at 177-197 threads the bilayer; it reads VLVLGLTLPLFIFTVAVLLLI. The Cytoplasmic segment spans residues 198–224; the sequence is YSLWNYSRQMRTMVGTREYSGHAHISA. Residues 225 to 245 traverse the membrane as a helical segment; that stretch reads MLSILSFLILYLSHYMVAVLI. The Extracellular segment spans residues 246–256; that stretch reads STQVLYLGSRT. Residues 257–277 form a helical membrane-spanning segment; it reads FVFCLLVIGMYPSIHSIVLIL. Residues 278–335 are Cytoplasmic-facing; sequence GNPKLKRNAKMFIVHCKCCHCTRAWVTSRSPRLSDLPVPPTHPSANKTSCSEACIMPS. Residues 308–327 are disordered; the sequence is PRLSDLPVPPTHPSANKTSC.

The protein belongs to the G-protein coupled receptor T2R family. As to expression, expressed in subsets of taste receptor cells of the tongue and palate epithelium and exclusively in gustducin-positive cells. Expressed in the duodenum, antrum and fundus (part of the stomach).

The protein resides in the membrane. Functionally, gustducin-coupled receptor implicated in the perception of bitter compounds in the oral cavity and the gastrointestinal tract. Signals through PLCB2 and the calcium-regulated cation channel TRPM5. This Rattus norvegicus (Rat) protein is Taste receptor type 2 member 119 (Tas2r119).